Consider the following 321-residue polypeptide: ATP-dependent 6-phosphofructokinase (321 aa).

ATP is bound at residue G12. ADP is bound by residues 22–26 (RGVVR) and 55–60 (RYSVSD). ATP-binding positions include 73 to 74 (RF) and 103 to 106 (GDGS). D104 contacts Mg(2+). 127–129 (TID) is a binding site for substrate. The active-site Proton acceptor is D129. R156 is an ADP binding site. Substrate-binding positions include R164 and 171–173 (MGR). ADP is bound by residues 187–189 (GCE) and 215–217 (KRH). Substrate contacts are provided by residues E224, R245, and 251 to 254 (HVQR).

This sequence belongs to the phosphofructokinase type A (PFKA) family. ATP-dependent PFK group I subfamily. Prokaryotic clade 'B1' sub-subfamily. Homotetramer. It depends on Mg(2+) as a cofactor.

Its subcellular location is the cytoplasm. The catalysed reaction is beta-D-fructose 6-phosphate + ATP = beta-D-fructose 1,6-bisphosphate + ADP + H(+). It functions in the pathway carbohydrate degradation; glycolysis; D-glyceraldehyde 3-phosphate and glycerone phosphate from D-glucose: step 3/4. Its activity is regulated as follows. Allosterically activated by ADP and other diphosphonucleosides, and allosterically inhibited by phosphoenolpyruvate. Functionally, catalyzes the phosphorylation of D-fructose 6-phosphate to fructose 1,6-bisphosphate by ATP, the first committing step of glycolysis. This chain is ATP-dependent 6-phosphofructokinase, found in Mannheimia succiniciproducens (strain KCTC 0769BP / MBEL55E).